The sequence spans 279 residues: Tryptophan 2,3-dioxygenase (279 aa).

Substrate is bound by residues 48–52, Y110, and R114; that span reads FIIQH. Residue H237 participates in heme binding. T251 lines the substrate pocket.

The protein belongs to the tryptophan 2,3-dioxygenase family. Homotetramer. Heme is required as a cofactor.

It carries out the reaction L-tryptophan + O2 = N-formyl-L-kynurenine. It functions in the pathway amino-acid degradation; L-tryptophan degradation via kynurenine pathway; L-kynurenine from L-tryptophan: step 1/2. Functionally, heme-dependent dioxygenase that catalyzes the oxidative cleavage of the L-tryptophan (L-Trp) pyrrole ring and converts L-tryptophan to N-formyl-L-kynurenine. Catalyzes the oxidative cleavage of the indole moiety. In Ruegeria sp. (strain TM1040) (Silicibacter sp.), this protein is Tryptophan 2,3-dioxygenase.